A 117-amino-acid chain; its full sequence is Putative cysteine proteinase inhibitor 7 (117 aa).

Positions 1-24 (MTMRTSSLLLAAVAVVAIVAGATA) are cleaved as a signal peptide. Residues 28-84 (GSWEPVDINDPHVQELGRWAVAEEDRGVAAGGLTFERVTDGEKQVVAGVNYRLTLEA) form the Cystatin domain. Residues 71 to 75 (QVVAG) carry the Secondary area of contact motif.

The protein belongs to the cystatin family. Phytocystatin subfamily.

Its subcellular location is the secreted. In terms of biological role, specific inhibitor of cysteine proteinases. Probably involved in the regulation of endogenous processes and in defense against pests and pathogens. The chain is Putative cysteine proteinase inhibitor 7 from Oryza sativa subsp. japonica (Rice).